Consider the following 465-residue polypeptide: 2-halobenzoate 1,2-dioxygenase large subunit (465 aa).

The Rieske domain maps to 56–154; the sequence is WVFLAHESQV…GFNVDGSHDL (99 aa). Residues Cys98, His100, Cys118, and His121 each coordinate [2Fe-2S] cluster. Fe cation contacts are provided by His227 and His232.

This sequence belongs to the bacterial ring-hydroxylating dioxygenase alpha subunit family. In terms of assembly, heterohexamer of 3 large (CbdA) subunits and 3 small (CbdB) subunits. The heterohexamer is part of 2-halobenzoate dioxygenase two component enzyme system. The other component is a NADH:acceptor reductase (CdbC). [2Fe-2S] cluster is required as a cofactor. Fe(2+) serves as cofactor.

The catalysed reaction is a 2-halobenzoate + NADH + O2 + H(+) = a halide anion + catechol + CO2 + NAD(+). The protein operates within xenobiotic degradation; benzoate degradation via CoA ligation. Its function is as follows. Component of 2-halobenzoate dioxygenase multicomponent enzyme system which catalyzes the incorporation of both atoms of molecular oxygen into 2-halobenzoate to form catechol. In Burkholderia cepacia (Pseudomonas cepacia), this protein is 2-halobenzoate 1,2-dioxygenase large subunit (cbdA).